The chain runs to 768 residues: Tripartite motif-containing protein 67 (768 aa).

An RING-type; degenerate zinc finger spans residues 7 to 42; it reads CPVCGSLFREPIILPCSHNVCLPCARTIAVQTPDGE. Low complexity predominate over residues 55–70; sequence AAAAATPPDQDAAAGA. Disordered regions lie at residues 55 to 74 and 247 to 284; these read AAAA…TSGG and QPPP…ASAP. The B box-type 1; degenerate zinc finger occupies 201-248; it reads AICQLCDRTPPEPAATLCEQCDVLYCATCQLKCHPSRGPFAKHRLVQP. Residues 247 to 257 are compositionally biased toward pro residues; that stretch reads QPPPPPTPPEA. The B box-type 2 zinc-finger motif lies at 285–327; the sequence is RKFPTCPEHEMENYSMYCVSCRSPVCYMCLEEGRHSKHEVKPL. The Zn(2+) site is built by Cys-290, His-293, Cys-313, and His-319. Residues 332 to 369 adopt a coiled-coil conformation; it reads KQHKAQLSQALNGVSDKAKEAKEFLVQLKNILQQIQEN. The region spanning 435–493 is the COS domain; it reads IKEDDPSGFLQISDALIKRVQTSQEQWVKGALEPKVSAEFDLTLDSEPLLQAIHQLDFV. The Fibronectin type-III domain occupies 498–592; that stretch reads PPVPLLQLEK…KTVVLQTSDV (95 aa). A B30.2/SPRY domain is found at 574 to 765; it reads NSSGVGPYSK…VPTNLGRPKL (192 aa).

It is found in the cytoplasm. The protein resides in the cytoskeleton. The protein is Tripartite motif-containing protein 67 (Trim67) of Mus musculus (Mouse).